The sequence spans 665 residues: UvrABC system protein B (665 aa).

Residues 31–414 (DGVKGGEKAQ…EMEQTETVVQ (384 aa)) form the Helicase ATP-binding domain. 44 to 51 (GATGTGKT) is an ATP binding site. The short motif at 97–120 (YYDYYQPEAYVPSSDTYIEKDSSI) is the Beta-hairpin element. A Helicase C-terminal domain is found at 435–601 (QIDDLVGEIH…TIIKEIRDLI (167 aa)). Residues 629-664 (ADLLMKLEREMKDAAKALDFETAATLRDTILELKAA) enclose the UVR domain.

Belongs to the UvrB family. As to quaternary structure, forms a heterotetramer with UvrA during the search for lesions. Interacts with UvrC in an incision complex.

It is found in the cytoplasm. The UvrABC repair system catalyzes the recognition and processing of DNA lesions. A damage recognition complex composed of 2 UvrA and 2 UvrB subunits scans DNA for abnormalities. Upon binding of the UvrA(2)B(2) complex to a putative damaged site, the DNA wraps around one UvrB monomer. DNA wrap is dependent on ATP binding by UvrB and probably causes local melting of the DNA helix, facilitating insertion of UvrB beta-hairpin between the DNA strands. Then UvrB probes one DNA strand for the presence of a lesion. If a lesion is found the UvrA subunits dissociate and the UvrB-DNA preincision complex is formed. This complex is subsequently bound by UvrC and the second UvrB is released. If no lesion is found, the DNA wraps around the other UvrB subunit that will check the other stand for damage. This chain is UvrABC system protein B, found in Enterococcus faecalis (strain ATCC 700802 / V583).